A 166-amino-acid polypeptide reads, in one-letter code: Bacterial non-heme ferritin (166 aa).

The 144-residue stretch at 2–145 (LSKELLAALN…THIDYLTRIG (144 aa)) folds into the Ferritin-like diiron domain. 5 residues coordinate Fe cation: Glu-17, Glu-50, His-53, Glu-94, and Gln-127.

It belongs to the ferritin family. Prokaryotic subfamily.

It localises to the cytoplasm. The catalysed reaction is 4 Fe(2+) + O2 + 6 H2O = 4 iron(III) oxide-hydroxide + 12 H(+). Functionally, iron-storage protein. In Staphylococcus epidermidis (strain ATCC 12228 / FDA PCI 1200), this protein is Bacterial non-heme ferritin (ftnA).